The following is a 104-amino-acid chain: AVIToxin-VAR1 (104 aa).

Residues 1–19 (MRSLLCAPLLLLLLSAGES) form the signal peptide. Intrachain disulfides connect Cys26-Cys38, Cys32-Cys50, Cys37-Cys78, Cys60-Cys86, and Cys80-Cys96.

The protein belongs to the AVIT (prokineticin) family. As to expression, expressed by the venom gland.

It is found in the secreted. Potent agonist for both PKR1/PROKR1 and PKR2/PROKR2. Potently contracts gastrointestinal (GI) smooth muscle. This Varanus varius (Lace monitor lizard) protein is AVIToxin-VAR1.